The following is a 164-amino-acid chain: Pleckstrin homology domain-containing family J member 1 (164 aa).

The PH domain maps to 15–108 (PAEMAAELGM…WMEALQRASY (94 aa)).

In Mus musculus (Mouse), this protein is Pleckstrin homology domain-containing family J member 1 (Plekhj1).